A 211-amino-acid chain; its full sequence is Imidazole glycerol phosphate synthase subunit HisH (211 aa).

The Glutamine amidotransferase type-1 domain occupies 4–211 (RVVILDYGSG…QLLANWVATL (208 aa)). Cys-82 functions as the Nucleophile in the catalytic mechanism. Catalysis depends on residues His-192 and Glu-194.

As to quaternary structure, heterodimer of HisH and HisF.

The protein localises to the cytoplasm. The catalysed reaction is 5-[(5-phospho-1-deoxy-D-ribulos-1-ylimino)methylamino]-1-(5-phospho-beta-D-ribosyl)imidazole-4-carboxamide + L-glutamine = D-erythro-1-(imidazol-4-yl)glycerol 3-phosphate + 5-amino-1-(5-phospho-beta-D-ribosyl)imidazole-4-carboxamide + L-glutamate + H(+). It catalyses the reaction L-glutamine + H2O = L-glutamate + NH4(+). The protein operates within amino-acid biosynthesis; L-histidine biosynthesis; L-histidine from 5-phospho-alpha-D-ribose 1-diphosphate: step 5/9. Its function is as follows. IGPS catalyzes the conversion of PRFAR and glutamine to IGP, AICAR and glutamate. The HisH subunit catalyzes the hydrolysis of glutamine to glutamate and ammonia as part of the synthesis of IGP and AICAR. The resulting ammonia molecule is channeled to the active site of HisF. The chain is Imidazole glycerol phosphate synthase subunit HisH from Thermobifida fusca (strain YX).